Consider the following 488-residue polypeptide: Bifunctional protein GlmU (488 aa).

A pyrophosphorylase region spans residues 1 to 237; it reads MPRTRTPLAA…AEEASGVNDR (237 aa). Residues 13-16, K27, Q82, 87-88, 110-112, G149, E164, N179, and N235 each bind UDP-N-acetyl-alpha-D-glucosamine; these read LAAG, GT, and SGD. D112 lines the Mg(2+) pocket. N235 provides a ligand contact to Mg(2+). Positions 238-258 are linker; it reads VELSRANRVMVGRLAEAFMRA. Residues 259-488 form an N-acetyltransferase region; it reads GVTIEDPARF…KGRPAARRAS (230 aa). UDP-N-acetyl-alpha-D-glucosamine is bound by residues R341 and K359. The active-site Proton acceptor is H371. The UDP-N-acetyl-alpha-D-glucosamine site is built by Y374 and N385. Acetyl-CoA contacts are provided by residues A388, 394-395, S413, A431, and R448; that span reads NY. Positions 459–488 are disordered; sequence AQRQAEKQMKGTATGPASARKGRPAARRAS. Positions 478–488 are enriched in basic residues; sequence RKGRPAARRAS.

In the N-terminal section; belongs to the N-acetylglucosamine-1-phosphate uridyltransferase family. This sequence in the C-terminal section; belongs to the transferase hexapeptide repeat family. In terms of assembly, homotrimer. Mg(2+) serves as cofactor.

The protein localises to the cytoplasm. It catalyses the reaction alpha-D-glucosamine 1-phosphate + acetyl-CoA = N-acetyl-alpha-D-glucosamine 1-phosphate + CoA + H(+). It carries out the reaction N-acetyl-alpha-D-glucosamine 1-phosphate + UTP + H(+) = UDP-N-acetyl-alpha-D-glucosamine + diphosphate. It functions in the pathway nucleotide-sugar biosynthesis; UDP-N-acetyl-alpha-D-glucosamine biosynthesis; N-acetyl-alpha-D-glucosamine 1-phosphate from alpha-D-glucosamine 6-phosphate (route II): step 2/2. Its pathway is nucleotide-sugar biosynthesis; UDP-N-acetyl-alpha-D-glucosamine biosynthesis; UDP-N-acetyl-alpha-D-glucosamine from N-acetyl-alpha-D-glucosamine 1-phosphate: step 1/1. It participates in bacterial outer membrane biogenesis; LPS lipid A biosynthesis. Its function is as follows. Catalyzes the last two sequential reactions in the de novo biosynthetic pathway for UDP-N-acetylglucosamine (UDP-GlcNAc). The C-terminal domain catalyzes the transfer of acetyl group from acetyl coenzyme A to glucosamine-1-phosphate (GlcN-1-P) to produce N-acetylglucosamine-1-phosphate (GlcNAc-1-P), which is converted into UDP-GlcNAc by the transfer of uridine 5-monophosphate (from uridine 5-triphosphate), a reaction catalyzed by the N-terminal domain. This is Bifunctional protein GlmU from Anaeromyxobacter dehalogenans (strain 2CP-1 / ATCC BAA-258).